A 514-amino-acid chain; its full sequence is HMG box-containing protein 1 (514 aa).

Residues Ala150–Asn182 form a disordered region. Over residues Trp170–Asn182 the composition is skewed to basic and acidic residues. The AXH domain occupies Trp203–Phe345. The HMG box DNA-binding region spans Cys434–Trp502.

As to quaternary structure, binds the second PAH repeat of SIN3A. Binds TCF4. Binds RB1. In terms of processing, ubiquitinated by the CTLH E3 ubiquitin-protein ligase complex, leading to subsequent proteasomal degradation.

The protein localises to the nucleus. Functionally, transcriptional repressor that binds to the promoter region of target genes. Plays a role in the regulation of the cell cycle and of the Wnt pathway. Binds preferentially to the sequence 5'-TTCATTCATTCA-3'. Binding to the histone H1.0 promoter is enhanced by interaction with RB1. Disrupts the interaction between DNA and TCF4. The protein is HMG box-containing protein 1 (HBP1) of Homo sapiens (Human).